The sequence spans 56 residues: Serine protease inhibitor Kazal-type 1 (56 aa).

The Kazal-like domain maps to 3 to 56 (PQREATCTSEVSGCPKIYNPVCGTDGITYSNECVLCSENKKRQTPVLIQKSGPC). 3 cysteine pairs are disulfide-bonded: Cys9-Cys38, Cys16-Cys35, and Cys24-Cys56.

The protein localises to the secreted. Its function is as follows. Serine protease inhibitor which exhibits anti-trypsin activity. In the pancreas, protects against trypsin-catalyzed premature activation of zymogens. In terms of biological role, in the male reproductive tract, binds to sperm heads where it modulates sperm capacitance by inhibiting calcium uptake and nitrogen oxide (NO) production. This chain is Serine protease inhibitor Kazal-type 1 (SPINK1), found in Sus scrofa (Pig).